The chain runs to 192 residues: Threonylcarbamoyl-AMP synthase (192 aa).

Residues 5 to 192 (TTSVAEAAHC…DATTGRVIRD (188 aa)) form the YrdC-like domain.

It belongs to the SUA5 family. TsaC subfamily.

Its subcellular location is the cytoplasm. The enzyme catalyses L-threonine + hydrogencarbonate + ATP = L-threonylcarbamoyladenylate + diphosphate + H2O. Functionally, required for the formation of a threonylcarbamoyl group on adenosine at position 37 (t(6)A37) in tRNAs that read codons beginning with adenine. Catalyzes the conversion of L-threonine, HCO(3)(-)/CO(2) and ATP to give threonylcarbamoyl-AMP (TC-AMP) as the acyladenylate intermediate, with the release of diphosphate. The sequence is that of Threonylcarbamoyl-AMP synthase from Acinetobacter baylyi (strain ATCC 33305 / BD413 / ADP1).